A 159-amino-acid polypeptide reads, in one-letter code: U-actitoxin-Avd13a/b (159 aa).

The N-terminal stretch at 1–18 (MKSIFLVFFAVCLVKAEA) is a signal peptide. The propeptide occupies 19–26 (GKGRKREP). 2 disulfides stabilise this stretch: C33-C45 and C36-C52. Positions 59–60 (EP) are excised as a propeptide. 2 disulfides stabilise this stretch: C67/C79 and C70/C86. Positions 93 to 94 (EP) are excised as a propeptide. 2 disulfide bridges follow: C101/C113 and C104/C120. Positions 127 to 128 (EP) are excised as a propeptide. 2 disulfides stabilise this stretch: C135/C147 and C138/C154.

This sequence belongs to the sea anemone BBH family.

It is found in the secreted. The protein resides in the nematocyst. Inhibits ion channels. The protein is U-actitoxin-Avd13a/b of Anemonia viridis (Snakelocks anemone).